A 253-amino-acid polypeptide reads, in one-letter code: Glucosamine-6-phosphate deaminase (253 aa).

Asp67 acts as the Proton acceptor; for enolization step in catalysis. Asn136 functions as the For ring-opening step in the catalytic mechanism. The active-site Proton acceptor; for ring-opening step is His138. Glu143 functions as the For ring-opening step in the catalytic mechanism.

Belongs to the glucosamine/galactosamine-6-phosphate isomerase family. NagB subfamily.

The catalysed reaction is alpha-D-glucosamine 6-phosphate + H2O = beta-D-fructose 6-phosphate + NH4(+). Its pathway is amino-sugar metabolism; N-acetylneuraminate degradation; D-fructose 6-phosphate from N-acetylneuraminate: step 5/5. Its function is as follows. Catalyzes the reversible isomerization-deamination of glucosamine 6-phosphate (GlcN6P) to form fructose 6-phosphate (Fru6P) and ammonium ion. The chain is Glucosamine-6-phosphate deaminase from Thermoanaerobacter pseudethanolicus (strain ATCC 33223 / 39E) (Clostridium thermohydrosulfuricum).